The chain runs to 709 residues: UV-stimulated scaffold protein A (709 aa).

The segment covering 1 to 10 (MDQKLSKLVE) has biased composition (basic and acidic residues). The segment at 1–20 (MDQKLSKLVEELTTSGEPRL) is disordered. Residues 2 to 145 (DQKLSKLVEE…HFLRHNKKVD (144 aa)) are VHS-like. Residues 165-199 (KHLDKIYQERASQAEREMQEMSGEIESCLTEVESC) are a coiled coil. 2 disordered regions span residues 230–289 (SCAG…DSDL) and 386–406 (EGGE…EDDE). Over residues 280-289 (PSDEDEDSDL) the composition is skewed to acidic residues. 2 positions are modified to phosphoserine: Ser-281 and Ser-287. Residues 386–395 (EGGERRRTEA) show a composition bias toward basic and acidic residues. Over residues 397-406 (GDAEEDEDDE) the composition is skewed to acidic residues. A Glycyl lysine isopeptide (Lys-Gly) (interchain with G-Cter in ubiquitin) cross-link involves residue Lys-414. The interval 469–495 (DHLPPPSSASPSRALPEPQEAQKLAAE) is disordered. Low complexity predominate over residues 477 to 486 (ASPSRALPEP). A UVSSA-type zinc finger spans residues 564 to 591 (QHWCRAPRPDGRLCERQDRLKCPFHGKI). Residues Cys-567, Cys-577, Cys-585, and His-588 each contribute to the Zn(2+) site. The interval 588–655 (HGKIVPRDDE…GKGRGKKRRY (68 aa)) is disordered. Positions 592-632 (VPRDDEGRPLDPEDRAREQRRQLQKQERPEWQDPELMRDVE) are enriched in basic and acidic residues. Basic residues predominate over residues 646-655 (GKGRGKKRRY).

Belongs to the UVSSA family. Interacts with the elongating form of RNA polymerase II (RNA pol IIo) during transcription stress. Interacts with the TFIIH complex during transcription stress. Interacts with ERCC6. Interacts with ERCC8. Interacts with USP7. Post-translationally, monoubiquitinated at Lys-414 in response to transcription stress; this promotes efficient transfer of TFIIH to stalled RNA polymerase II.

It is found in the chromosome. In terms of biological role, factor involved in transcription-coupled nucleotide excision repair (TC-NER), a mechanism that rapidly removes RNA polymerase II-blocking lesions from the transcribed strand of active genes. Acts as a key adapter that promotes recruitment of factors involved in TC-NER. Facilitates the ubiquitination of the elongating form of RNA polymerase II (RNA pol IIo) at DNA damage sites, thereby promoting RNA pol IIo backtracking and access by the TC-NER machinery to lesion sites. Also promotes stabilization of ERCC6/CSB by recruiting deubiquitinating enzyme USP7 to TC-NER complexes, preventing UV-induced degradation of ERCC6 by the proteasome. Mediates the recruitment of the TFIIH complex and other factors that are required for nucleotide excision repair to RNA polymerase II. Also required to inactivate stalled RNA polymerase II by blocking the access of TCEA1/TFIIS, thereby preventing reactivation of RNA polymerase II. Not involved in processing oxidative damage. The sequence is that of UV-stimulated scaffold protein A from Homo sapiens (Human).